The chain runs to 882 residues: Alanine--tRNA ligase (882 aa).

Residues His-563, His-567, Cys-665, and His-669 each coordinate Zn(2+).

The protein belongs to the class-II aminoacyl-tRNA synthetase family. Zn(2+) serves as cofactor.

It localises to the cytoplasm. The enzyme catalyses tRNA(Ala) + L-alanine + ATP = L-alanyl-tRNA(Ala) + AMP + diphosphate. Catalyzes the attachment of alanine to tRNA(Ala) in a two-step reaction: alanine is first activated by ATP to form Ala-AMP and then transferred to the acceptor end of tRNA(Ala). Also edits incorrectly charged Ser-tRNA(Ala) and Gly-tRNA(Ala) via its editing domain. This Synechococcus sp. (strain RCC307) protein is Alanine--tRNA ligase.